Consider the following 175-residue polypeptide: Adenine phosphoribosyltransferase (175 aa).

The protein belongs to the purine/pyrimidine phosphoribosyltransferase family. Homodimer.

It localises to the cytoplasm. The enzyme catalyses AMP + diphosphate = 5-phospho-alpha-D-ribose 1-diphosphate + adenine. The protein operates within purine metabolism; AMP biosynthesis via salvage pathway; AMP from adenine: step 1/1. Functionally, catalyzes a salvage reaction resulting in the formation of AMP, that is energically less costly than de novo synthesis. The sequence is that of Adenine phosphoribosyltransferase from Synechococcus sp. (strain JA-3-3Ab) (Cyanobacteria bacterium Yellowstone A-Prime).